We begin with the raw amino-acid sequence, 542 residues long: CTP synthase (542 aa).

The amidoligase domain stretch occupies residues 1–265 (MARYVFITGG…DSEVLSAFGI (265 aa)). Ser-13 contributes to the CTP binding site. UTP is bound at residue Ser-13. 14–19 (SLGKGI) is an ATP binding site. Tyr-54 lines the L-glutamine pocket. Residue Asp-71 coordinates ATP. Residues Asp-71 and Glu-139 each coordinate Mg(2+). CTP contacts are provided by residues 146 to 148 (DIE), 186 to 191 (KTKPTQ), and Lys-222. Residues 186–191 (KTKPTQ) and Lys-222 each bind UTP. Residues 291–541 (TIAVVGKYTG…IEAAIEQSRL (251 aa)) form the Glutamine amidotransferase type-1 domain. Gly-353 serves as a coordination point for L-glutamine. Cys-380 acts as the Nucleophile; for glutamine hydrolysis in catalysis. Residues 381–384 (FGMQ), Glu-404, and Arg-469 each bind L-glutamine. Active-site residues include His-514 and Glu-516.

Belongs to the CTP synthase family. In terms of assembly, homotetramer.

The catalysed reaction is UTP + L-glutamine + ATP + H2O = CTP + L-glutamate + ADP + phosphate + 2 H(+). It catalyses the reaction L-glutamine + H2O = L-glutamate + NH4(+). The enzyme catalyses UTP + NH4(+) + ATP = CTP + ADP + phosphate + 2 H(+). The protein operates within pyrimidine metabolism; CTP biosynthesis via de novo pathway; CTP from UDP: step 2/2. Its activity is regulated as follows. Allosterically activated by GTP, when glutamine is the substrate; GTP has no effect on the reaction when ammonia is the substrate. The allosteric effector GTP functions by stabilizing the protein conformation that binds the tetrahedral intermediate(s) formed during glutamine hydrolysis. Inhibited by the product CTP, via allosteric rather than competitive inhibition. Catalyzes the ATP-dependent amination of UTP to CTP with either L-glutamine or ammonia as the source of nitrogen. Regulates intracellular CTP levels through interactions with the four ribonucleotide triphosphates. The chain is CTP synthase from Brucella canis (strain ATCC 23365 / NCTC 10854 / RM-666).